Reading from the N-terminus, the 173-residue chain is ATP synthase subunit b (173 aa).

A helical membrane pass occupies residues 15–35 (GVEWGTVIVQVLTFIVLLALL).

The protein belongs to the ATPase B chain family. In terms of assembly, F-type ATPases have 2 components, F(1) - the catalytic core - and F(0) - the membrane proton channel. F(1) has five subunits: alpha(3), beta(3), gamma(1), delta(1), epsilon(1). F(0) has three main subunits: a(1), b(2) and c(10-14). The alpha and beta chains form an alternating ring which encloses part of the gamma chain. F(1) is attached to F(0) by a central stalk formed by the gamma and epsilon chains, while a peripheral stalk is formed by the delta and b chains.

It is found in the cell membrane. F(1)F(0) ATP synthase produces ATP from ADP in the presence of a proton or sodium gradient. F-type ATPases consist of two structural domains, F(1) containing the extramembraneous catalytic core and F(0) containing the membrane proton channel, linked together by a central stalk and a peripheral stalk. During catalysis, ATP synthesis in the catalytic domain of F(1) is coupled via a rotary mechanism of the central stalk subunits to proton translocation. Functionally, component of the F(0) channel, it forms part of the peripheral stalk, linking F(1) to F(0). The sequence is that of ATP synthase subunit b from Staphylococcus aureus (strain MSSA476).